Consider the following 289-residue polypeptide: NFIL3 like protein (289 aa).

The interval 1–27 (MDVGFSGLPDVSQSHSKTLWGARGRGP) is disordered. The 64-residue stretch at 42–105 (DTVYWEKRRK…GLLPLTGGPR (64 aa)) folds into the bZIP domain. The tract at residues 48–64 (KRRKNNEAAKRSREKRR) is basic motif. The interval 70–91 (IEGRLAALMEENALLKGELKAL) is leucine-zipper.

Belongs to the bZIP family. NFIL3 subfamily.

It localises to the nucleus. This Homo sapiens (Human) protein is NFIL3 like protein.